The chain runs to 611 residues: Acetylcholinesterase (611 aa).

Residues 1-31 (MRPPWCPLYTPSLAAPILLLLLFLLGGGAEA) form the signal peptide. Cys97 and Cys124 form a disulfide bridge. Residue Ser231 is the Acyl-ester intermediate of the active site. The cysteines at positions 285 and 300 are disulfide-linked. Residue Asn293 is glycosylated (N-linked (GlcNAc...) asparagine). Glu362 serves as the catalytic Charge relay system. Asn378 carries an N-linked (GlcNAc...) asparagine glycan. A disulfide bridge links Cys437 with Cys557. The active-site Charge relay system is the His475. Asn492 carries an N-linked (GlcNAc...) asparagine glycan.

The protein belongs to the type-B carboxylesterase/lipase family. As to quaternary structure, interacts with PRIMA1. The interaction with PRIMA1 is required to anchor it to the basal lamina of cells and organize into tetramers. Isoform H generates GPI-anchored dimers; disulfide linked. Isoform T generates multiple structures, ranging from monomers and dimers to collagen-tailed and hydrophobic-tailed forms, in which catalytic tetramers are associated with anchoring proteins that attach them to the basal lamina or to cell membranes. In the collagen-tailed forms, isoform T subunits are associated with a specific collagen, COLQ, which triggers the formation of isoform T tetramers, from monomers and dimers.

Its subcellular location is the synapse. It localises to the secreted. The protein localises to the cell membrane. The catalysed reaction is acetylcholine + H2O = choline + acetate + H(+). Its function is as follows. Terminates signal transduction at the neuromuscular junction by rapid hydrolysis of the acetylcholine released into the synaptic cleft. The sequence is that of Acetylcholinesterase (ACHE) from Felis catus (Cat).